Consider the following 113-residue polypeptide: Small ribosomal subunit protein bS6 (113 aa).

Belongs to the bacterial ribosomal protein bS6 family.

Its function is as follows. Binds together with bS18 to 16S ribosomal RNA. In Ruthia magnifica subsp. Calyptogena magnifica, this protein is Small ribosomal subunit protein bS6.